A 77-amino-acid chain; its full sequence is Large ribosomal subunit protein bL28 (77 aa).

Positions methionine 1–alanine 21 are disordered.

Belongs to the bacterial ribosomal protein bL28 family.

The sequence is that of Large ribosomal subunit protein bL28 from Chromobacterium violaceum (strain ATCC 12472 / DSM 30191 / JCM 1249 / CCUG 213 / NBRC 12614 / NCIMB 9131 / NCTC 9757 / MK).